Here is a 553-residue protein sequence, read N- to C-terminus: Glutamate--tRNA ligase (553 aa).

The 'HIGH' region motif lies at 41–51 (PSPTGFQHIGG). The short motif at 293-297 (KLSKR) is the 'KMSKS' region element. ATP is bound at residue Lys296.

The protein belongs to the class-I aminoacyl-tRNA synthetase family. Glutamate--tRNA ligase type 1 subfamily. In terms of assembly, monomer.

The protein localises to the cytoplasm. It catalyses the reaction tRNA(Glu) + L-glutamate + ATP = L-glutamyl-tRNA(Glu) + AMP + diphosphate. In terms of biological role, catalyzes the attachment of glutamate to tRNA(Glu) in a two-step reaction: glutamate is first activated by ATP to form Glu-AMP and then transferred to the acceptor end of tRNA(Glu). The sequence is that of Glutamate--tRNA ligase from Clostridium beijerinckii (strain ATCC 51743 / NCIMB 8052) (Clostridium acetobutylicum).